The primary structure comprises 280 residues: 4-hydroxy-3-methylbut-2-enyl diphosphate reductase (280 aa).

C12 is a [4Fe-4S] cluster binding site. Positions 40 and 72 each coordinate (2E)-4-hydroxy-3-methylbut-2-enyl diphosphate. Dimethylallyl diphosphate is bound by residues H40 and H72. Residues H40 and H72 each contribute to the isopentenyl diphosphate site. A [4Fe-4S] cluster-binding site is contributed by C94. H122 contributes to the (2E)-4-hydroxy-3-methylbut-2-enyl diphosphate binding site. H122 contributes to the dimethylallyl diphosphate binding site. H122 provides a ligand contact to isopentenyl diphosphate. The active-site Proton donor is the E124. A (2E)-4-hydroxy-3-methylbut-2-enyl diphosphate-binding site is contributed by T160. C188 provides a ligand contact to [4Fe-4S] cluster. Residues S216, N218, and S260 each contribute to the (2E)-4-hydroxy-3-methylbut-2-enyl diphosphate site. Residues S216, N218, and S260 each coordinate dimethylallyl diphosphate. 3 residues coordinate isopentenyl diphosphate: S216, N218, and S260.

It belongs to the IspH family. The cofactor is [4Fe-4S] cluster.

The catalysed reaction is isopentenyl diphosphate + 2 oxidized [2Fe-2S]-[ferredoxin] + H2O = (2E)-4-hydroxy-3-methylbut-2-enyl diphosphate + 2 reduced [2Fe-2S]-[ferredoxin] + 2 H(+). The enzyme catalyses dimethylallyl diphosphate + 2 oxidized [2Fe-2S]-[ferredoxin] + H2O = (2E)-4-hydroxy-3-methylbut-2-enyl diphosphate + 2 reduced [2Fe-2S]-[ferredoxin] + 2 H(+). It functions in the pathway isoprenoid biosynthesis; dimethylallyl diphosphate biosynthesis; dimethylallyl diphosphate from (2E)-4-hydroxy-3-methylbutenyl diphosphate: step 1/1. It participates in isoprenoid biosynthesis; isopentenyl diphosphate biosynthesis via DXP pathway; isopentenyl diphosphate from 1-deoxy-D-xylulose 5-phosphate: step 6/6. Catalyzes the conversion of 1-hydroxy-2-methyl-2-(E)-butenyl 4-diphosphate (HMBPP) into a mixture of isopentenyl diphosphate (IPP) and dimethylallyl diphosphate (DMAPP). Acts in the terminal step of the DOXP/MEP pathway for isoprenoid precursor biosynthesis. In Trichlorobacter lovleyi (strain ATCC BAA-1151 / DSM 17278 / SZ) (Geobacter lovleyi), this protein is 4-hydroxy-3-methylbut-2-enyl diphosphate reductase.